Consider the following 933-residue polypeptide: Phosphoenolpyruvate carboxylase (933 aa).

Residues His-164 and Lys-595 contribute to the active site.

It belongs to the PEPCase type 1 family. Mg(2+) is required as a cofactor.

The enzyme catalyses oxaloacetate + phosphate = phosphoenolpyruvate + hydrogencarbonate. Functionally, forms oxaloacetate, a four-carbon dicarboxylic acid source for the tricarboxylic acid cycle. This is Phosphoenolpyruvate carboxylase from Rhodopseudomonas palustris (strain HaA2).